A 394-amino-acid polypeptide reads, in one-letter code: NADH-quinone oxidoreductase subunit D 2 (394 aa).

The protein belongs to the complex I 49 kDa subunit family. In terms of assembly, NDH-1 is composed of 14 different subunits. Subunits NuoB, C, D, E, F, and G constitute the peripheral sector of the complex.

The protein localises to the cell membrane. The enzyme catalyses a quinone + NADH + 5 H(+)(in) = a quinol + NAD(+) + 4 H(+)(out). In terms of biological role, NDH-1 shuttles electrons from NADH, via FMN and iron-sulfur (Fe-S) centers, to quinones in the respiratory chain. The immediate electron acceptor for the enzyme in this species is believed to be a menaquinone. Couples the redox reaction to proton translocation (for every two electrons transferred, four hydrogen ions are translocated across the cytoplasmic membrane), and thus conserves the redox energy in a proton gradient. This Streptomyces griseus subsp. griseus (strain JCM 4626 / CBS 651.72 / NBRC 13350 / KCC S-0626 / ISP 5235) protein is NADH-quinone oxidoreductase subunit D 2.